The primary structure comprises 99 residues: Small ribosomal subunit protein bS21 (99 aa).

Residues 60–99 form a disordered region; sequence KKLQREGLLPMKPKPVFGAGPGGDRRGPGAGPGAGPRPAR.

Belongs to the bacterial ribosomal protein bS21 family.

In Rhodopseudomonas palustris (strain BisA53), this protein is Small ribosomal subunit protein bS21.